Reading from the N-terminus, the 154-residue chain is Myoglobin (154 aa).

A Globin domain is found at 2 to 148; the sequence is ELSDQEWKHV…FRNDMASKYK (147 aa). Position 65 (His65) interacts with nitrite. His65 provides a ligand contact to O2. Residue His94 participates in heme b binding.

This sequence belongs to the globin family. Monomeric.

Its subcellular location is the cytoplasm. It is found in the sarcoplasm. It carries out the reaction Fe(III)-heme b-[protein] + nitric oxide + H2O = Fe(II)-heme b-[protein] + nitrite + 2 H(+). The catalysed reaction is H2O2 + AH2 = A + 2 H2O. Functionally, monomeric heme protein which primary function is to store oxygen and facilitate its diffusion within muscle tissues. Reversibly binds oxygen through a pentacoordinated heme iron and enables its timely and efficient release as needed during periods of heightened demand. Depending on the oxidative conditions of tissues and cells, and in addition to its ability to bind oxygen, it also has a nitrite reductase activity whereby it regulates the production of bioactive nitric oxide. Under stress conditions, like hypoxia and anoxia, it also protects cells against reactive oxygen species thanks to its pseudoperoxidase activity. This chain is Myoglobin (MB), found in Alligator mississippiensis (American alligator).